The primary structure comprises 477 residues: Bifunctional protein HldE (477 aa).

A ribokinase region spans residues 1-318 (MKVTLPEFER…ENAVRGRADT (318 aa)). K179 is subject to N6-acetyllysine. 195–198 (NLSE) is an ATP binding site. Residue D264 is part of the active site. A cytidylyltransferase region spans residues 344–477 (MTNGVFDILH…IKKIQQDKKG (134 aa)).

This sequence in the N-terminal section; belongs to the carbohydrate kinase PfkB family. The protein in the C-terminal section; belongs to the cytidylyltransferase family. In terms of assembly, homodimer.

It carries out the reaction D-glycero-beta-D-manno-heptose 7-phosphate + ATP = D-glycero-beta-D-manno-heptose 1,7-bisphosphate + ADP + H(+). The enzyme catalyses D-glycero-beta-D-manno-heptose 1-phosphate + ATP + H(+) = ADP-D-glycero-beta-D-manno-heptose + diphosphate. Its pathway is nucleotide-sugar biosynthesis; ADP-L-glycero-beta-D-manno-heptose biosynthesis; ADP-L-glycero-beta-D-manno-heptose from D-glycero-beta-D-manno-heptose 7-phosphate: step 1/4. It functions in the pathway nucleotide-sugar biosynthesis; ADP-L-glycero-beta-D-manno-heptose biosynthesis; ADP-L-glycero-beta-D-manno-heptose from D-glycero-beta-D-manno-heptose 7-phosphate: step 3/4. Its function is as follows. Catalyzes the phosphorylation of D-glycero-D-manno-heptose 7-phosphate at the C-1 position to selectively form D-glycero-beta-D-manno-heptose-1,7-bisphosphate. In terms of biological role, catalyzes the ADP transfer from ATP to D-glycero-beta-D-manno-heptose 1-phosphate, yielding ADP-D-glycero-beta-D-manno-heptose. The sequence is that of Bifunctional protein HldE from Shigella flexneri serotype 5b (strain 8401).